Here is a 310-residue protein sequence, read N- to C-terminus: 4-diphosphocytidyl-2-C-methyl-D-erythritol kinase (310 aa).

Lys-10 is a catalytic residue. 102 to 112 (PVAGGMAGGSA) contributes to the ATP binding site. Asp-144 is an active-site residue. The interval 289–310 (TRTARGPAAGAQLLPGPVGSFA) is disordered.

Belongs to the GHMP kinase family. IspE subfamily.

It carries out the reaction 4-CDP-2-C-methyl-D-erythritol + ATP = 4-CDP-2-C-methyl-D-erythritol 2-phosphate + ADP + H(+). Its pathway is isoprenoid biosynthesis; isopentenyl diphosphate biosynthesis via DXP pathway; isopentenyl diphosphate from 1-deoxy-D-xylulose 5-phosphate: step 3/6. Catalyzes the phosphorylation of the position 2 hydroxy group of 4-diphosphocytidyl-2C-methyl-D-erythritol. The polypeptide is 4-diphosphocytidyl-2-C-methyl-D-erythritol kinase (Cutibacterium acnes (strain DSM 16379 / KPA171202) (Propionibacterium acnes)).